Consider the following 163-residue polypeptide: Small ribosomal subunit protein bS18c (163 aa).

Disordered regions lie at residues 1-54 and 121-163; these read MYTS…PGDR and ITGP…SSDC. Basic residues predominate over residues 7–48; sequence PFHKSKQTFHKSKQTFRKSKQTFRKFKQPFRKPKQPFRRRPR. Residues 140 to 163 are compositionally biased toward low complexity; the sequence is NSNRNLRNSNQTLRNNNRNLSSDC.

The protein belongs to the bacterial ribosomal protein bS18 family. In terms of assembly, part of the 30S ribosomal subunit.

The protein resides in the plastid. It is found in the chloroplast. The chain is Small ribosomal subunit protein bS18c from Oryza nivara (Indian wild rice).